We begin with the raw amino-acid sequence, 560 residues long: Choline/ethanolamine transporter FLVCR1 (560 aa).

The tract at residues 1–22 (MVKLNDEEGAAMAPGHQPTNGY) is disordered. At 1–99 (MVKLNDEEGA…TPGTEGSPAP (99 aa)) the chain is on the cytoplasmic side. Serine 56 is subject to Phosphoserine. The disordered stretch occupies residues 68-99 (QTPLAPEEETQTRLLPTGPGEETPGTEGSPAP). A compositionally biased stretch (low complexity) spans 83 to 95 (PTGPGEETPGTEG). The chain crosses the membrane as a helical span at residues 100–124 (QTALSARRFVVLLIFSLYSLVNAFQ). Residues 125 to 142 (WIQYSVISNVFEGFYGVS) are Extracellular-facing. The helical transmembrane segment at 143–170 (SLHIDWLSMVYMLAYVPLIFPATWLLDT) threads the bilayer. The Cytoplasmic portion of the chain corresponds to 171-172 (RG). The chain crosses the membrane as a helical span at residues 173 to 192 (LRLTALLGSGLNCLGAWVKC). Over 193–199 (ASVQQHL) the chain is Extracellular. A helical transmembrane segment spans residues 200–228 (FWVTMLGQCLCSVAQVFILGLPSRIASVW). Glutamine 214 lines the ethanolamine pocket. Over 229–233 (FGPKE) the chain is Cytoplasmic. Residues 234–259 (VSTACATAVLGNQLGAAIGFLLPPVL) form a helical membrane-spanning segment. The Extracellular portion of the chain corresponds to 260–265 (VPNTQN). An N-linked (GlcNAc...) asparagine glycan is attached at asparagine 265. A helical membrane pass occupies residues 266 to 295 (NTDLLACNISTMFYGTSSVATFLCFLTIIA). Residues 296-331 (FKEKPQYPPSQAQAALQNSPPAKYSYKKSIRNLFRN) are Cytoplasmic-facing. Residues 332-362 (VPFVLLLITYGIITGAFYSVSTLLNQMILTY) traverse the membrane as a helical segment. Residues 363-366 (YKGE) lie on the Extracellular side of the membrane. The chain crosses the membrane as a helical span at residues 367–395 (EVSAGKIGLTLVVAGMVGSILCGFWLDYT). Residues 396–397 (KI) are Cytoplasmic-facing. Residues 398-420 (YKQTTLIVYILSFLGMVIFTFTL) traverse the membrane as a helical segment. Topologically, residues 421–423 (DLG) are extracellular. Residues 424-453 (YGIVVFVTGGVLGFFMTGYLPLGFEFAVEI) traverse the membrane as a helical segment. Residues 454–461 (TYPESEGT) lie on the Cytoplasmic side of the membrane. A helical membrane pass occupies residues 462 to 487 (SSGLLNAAAQIFGILFTLAQGKLTTD). Residue glutamine 471 coordinates ethanolamine. Glutamine 471 contributes to the choline binding site. Residues 488–489 (YS) lie on the Extracellular side of the membrane. Residues 490-512 (PKAGNIFLCVWLFLGIILTALIK) traverse the membrane as a helical segment. The Cytoplasmic portion of the chain corresponds to 513–560 (SDLRRHNINIGIANGDIKAVPVEDTVEDSPTDKESKTIVMSKQSESAI). The disordered stretch occupies residues 537–560 (TVEDSPTDKESKTIVMSKQSESAI). Serine 541 is subject to Phosphoserine. Polar residues predominate over residues 550–560 (IVMSKQSESAI).

Belongs to the major facilitator superfamily. Feline leukemia virus subgroup C receptor (TC 2.A.1.28.1) family.

The protein resides in the cell membrane. The enzyme catalyses choline(out) = choline(in). It carries out the reaction ethanolamine(in) = ethanolamine(out). It catalyses the reaction heme b(in) = heme b(out). Functionally, uniporter that mediates the transport of extracellular choline and ethanolamine into cells, thereby playing a key role in phospholipid biosynthesis. Choline and ethanolamine are the precursors of phosphatidylcholine and phosphatidylethanolamine, respectively, the two most abundant phospholipids. Transport is not coupled with proton transport and is exclusively driven by the choline (or ethanolamine) gradient across the plasma membrane. Also acts as a heme b transporter that mediates heme efflux from the cytoplasm to the extracellular compartment. (Microbial infection) Confers susceptibility to Feline leukemia virus subgroup C (FeLV-C) infection, which is associated with fatal erythroid aplasia, also known as aplastic anemia. The protein is Choline/ethanolamine transporter FLVCR1 (FLVCR1) of Felis catus (Cat).